The primary structure comprises 257 residues: Electron transfer flavoprotein subunit beta (257 aa).

This sequence belongs to the ETF beta-subunit/FixA family. As to quaternary structure, heterodimer of an alpha and a beta subunit. It depends on FAD as a cofactor. AMP is required as a cofactor.

Its function is as follows. The electron transfer flavoprotein serves as a specific electron acceptor for other dehydrogenases. It transfers the electrons to the main respiratory chain via ETF-ubiquinone oxidoreductase (ETF dehydrogenase). In Bacillus subtilis (strain 168), this protein is Electron transfer flavoprotein subunit beta (etfB).